We begin with the raw amino-acid sequence, 239 residues long: MAIQPPGSYPQGNKKGKAKKKSGQNAFARKEWYTLRSPSIFPNNINGKTLMTKSAGKNSYMNMIGRRYDVNQADLTGNNDVGHRKFIFKIGDIKGSECVGFFDGMELTSDKHKAMIKKWHTLIEAQKDIVAKDGSVFRVFVMGVTRRHPGYVKKTCYVKHSDEKKIRKIMFDVIEEELSGCDVQKIMKKLANETVGKRIEELGSEIFPLQNCCVRKVKTIKSHQTASVGQQEAIDAITN.

The interval 1-24 (MAIQPPGSYPQGNKKGKAKKKSGQ) is disordered.

The protein belongs to the eukaryotic ribosomal protein eS1 family. Component of the small ribosomal subunit. Mature ribosomes consist of a small (40S) and a large (60S) subunit. The 40S subunit contains about 33 different proteins and 1 molecule of RNA (18S). The 60S subunit contains about 49 different proteins and 3 molecules of RNA (25S, 5.8S and 5S).

Its subcellular location is the cytoplasm. The chain is Small ribosomal subunit protein eS1 from Encephalitozoon cuniculi (strain GB-M1) (Microsporidian parasite).